Here is a 114-residue protein sequence, read N- to C-terminus: Iron-sulfur cluster insertion protein ErpA (114 aa).

3 residues coordinate iron-sulfur cluster: Cys-42, Cys-106, and Cys-108.

The protein belongs to the HesB/IscA family. Homodimer. Requires iron-sulfur cluster as cofactor.

Required for insertion of 4Fe-4S clusters for at least IspG. The sequence is that of Iron-sulfur cluster insertion protein ErpA from Klebsiella pneumoniae (strain 342).